Reading from the N-terminus, the 253-residue chain is ATP synthase subunit b 1 (253 aa).

Residues 5–27 (GWTVALQAVNFLILVLLLRHFLY) form a helical membrane-spanning segment.

This sequence belongs to the ATPase B chain family. In terms of assembly, F-type ATPases have 2 components, F(1) - the catalytic core - and F(0) - the membrane proton channel. F(1) has five subunits: alpha(3), beta(3), gamma(1), delta(1), epsilon(1). F(0) has three main subunits: a(1), b(2) and c(10-14). The alpha and beta chains form an alternating ring which encloses part of the gamma chain. F(1) is attached to F(0) by a central stalk formed by the gamma and epsilon chains, while a peripheral stalk is formed by the delta and b chains.

The protein localises to the cell inner membrane. F(1)F(0) ATP synthase produces ATP from ADP in the presence of a proton or sodium gradient. F-type ATPases consist of two structural domains, F(1) containing the extramembraneous catalytic core and F(0) containing the membrane proton channel, linked together by a central stalk and a peripheral stalk. During catalysis, ATP synthesis in the catalytic domain of F(1) is coupled via a rotary mechanism of the central stalk subunits to proton translocation. Its function is as follows. Component of the F(0) channel, it forms part of the peripheral stalk, linking F(1) to F(0). The chain is ATP synthase subunit b 1 from Rhodospirillum centenum (strain ATCC 51521 / SW).